The following is a 297-amino-acid chain: Ribosomal RNA small subunit methyltransferase A (297 aa).

S-adenosyl-L-methionine contacts are provided by N31, L33, G58, E79, D104, and N129.

It belongs to the class I-like SAM-binding methyltransferase superfamily. rRNA adenine N(6)-methyltransferase family. RsmA subfamily.

It localises to the cytoplasm. It catalyses the reaction adenosine(1518)/adenosine(1519) in 16S rRNA + 4 S-adenosyl-L-methionine = N(6)-dimethyladenosine(1518)/N(6)-dimethyladenosine(1519) in 16S rRNA + 4 S-adenosyl-L-homocysteine + 4 H(+). Its function is as follows. Specifically dimethylates two adjacent adenosines (A1518 and A1519) in the loop of a conserved hairpin near the 3'-end of 16S rRNA in the 30S particle. May play a critical role in biogenesis of 30S subunits. This Staphylococcus aureus (strain Newman) protein is Ribosomal RNA small subunit methyltransferase A.